The sequence spans 176 residues: Isopentenyl-diphosphate Delta-isomerase (176 aa).

Residues H22 and H28 each contribute to the Mn(2+) site. The Nudix hydrolase domain occupies 26-160; that stretch reads LRHKAVSVFV…PERYTPWLRI (135 aa). Residue C62 is part of the active site. A Mn(2+)-binding site is contributed by H64. Residue E82 participates in Mg(2+) binding. The Mn(2+) site is built by E108 and E110. Residue E110 is part of the active site.

It belongs to the IPP isomerase type 1 family. Requires Mg(2+) as cofactor. Mn(2+) is required as a cofactor.

The protein localises to the cytoplasm. It carries out the reaction isopentenyl diphosphate = dimethylallyl diphosphate. The protein operates within isoprenoid biosynthesis; dimethylallyl diphosphate biosynthesis; dimethylallyl diphosphate from isopentenyl diphosphate: step 1/1. It participates in porphyrin-containing compound metabolism; chlorophyll biosynthesis. Its function is as follows. Catalyzes the 1,3-allylic rearrangement of the homoallylic substrate isopentenyl (IPP) to its highly electrophilic allylic isomer, dimethylallyl diphosphate (DMAPP). This is Isopentenyl-diphosphate Delta-isomerase from Dinoroseobacter shibae (strain DSM 16493 / NCIMB 14021 / DFL 12).